We begin with the raw amino-acid sequence, 60 residues long: UPF0434 protein YcaR (60 aa).

The protein belongs to the UPF0434 family.

The chain is UPF0434 protein YcaR from Salmonella arizonae (strain ATCC BAA-731 / CDC346-86 / RSK2980).